The chain runs to 227 residues: Cytochrome c oxidase subunit 2 (227 aa).

Residues 1–14 lie on the Mitochondrial intermembrane side of the membrane; it reads MAYPFQLGLQDATS. A helical transmembrane segment spans residues 15–45; the sequence is PIMEELTNFHDHTLMIVFLISSLVLYLISLM. At 46-59 the chain is on the mitochondrial matrix side; the sequence is LTTKLIHTNTMDAQ. The helical transmembrane segment at 60–87 threads the bilayer; that stretch reads EVETVWTILPAIILIMIALPSLRILYLM. Residues 88 to 227 are Mitochondrial intermembrane-facing; sequence DEINNPVLTV…LFENWSTSMI (140 aa). Cu cation-binding residues include H161, C196, E198, C200, H204, and M207. E198 contacts Mg(2+).

The protein belongs to the cytochrome c oxidase subunit 2 family. As to quaternary structure, component of the cytochrome c oxidase (complex IV, CIV), a multisubunit enzyme composed of 14 subunits. The complex is composed of a catalytic core of 3 subunits MT-CO1, MT-CO2 and MT-CO3, encoded in the mitochondrial DNA, and 11 supernumerary subunits COX4I, COX5A, COX5B, COX6A, COX6B, COX6C, COX7A, COX7B, COX7C, COX8 and NDUFA4, which are encoded in the nuclear genome. The complex exists as a monomer or a dimer and forms supercomplexes (SCs) in the inner mitochondrial membrane with NADH-ubiquinone oxidoreductase (complex I, CI) and ubiquinol-cytochrome c oxidoreductase (cytochrome b-c1 complex, complex III, CIII), resulting in different assemblies (supercomplex SCI(1)III(2)IV(1) and megacomplex MCI(2)III(2)IV(2)). Found in a complex with TMEM177, COA6, COX18, COX20, SCO1 and SCO2. Interacts with TMEM177 in a COX20-dependent manner. Interacts with COX20. Interacts with COX16. Cu cation serves as cofactor.

It is found in the mitochondrion inner membrane. It carries out the reaction 4 Fe(II)-[cytochrome c] + O2 + 8 H(+)(in) = 4 Fe(III)-[cytochrome c] + 2 H2O + 4 H(+)(out). Its function is as follows. Component of the cytochrome c oxidase, the last enzyme in the mitochondrial electron transport chain which drives oxidative phosphorylation. The respiratory chain contains 3 multisubunit complexes succinate dehydrogenase (complex II, CII), ubiquinol-cytochrome c oxidoreductase (cytochrome b-c1 complex, complex III, CIII) and cytochrome c oxidase (complex IV, CIV), that cooperate to transfer electrons derived from NADH and succinate to molecular oxygen, creating an electrochemical gradient over the inner membrane that drives transmembrane transport and the ATP synthase. Cytochrome c oxidase is the component of the respiratory chain that catalyzes the reduction of oxygen to water. Electrons originating from reduced cytochrome c in the intermembrane space (IMS) are transferred via the dinuclear copper A center (CU(A)) of subunit 2 and heme A of subunit 1 to the active site in subunit 1, a binuclear center (BNC) formed by heme A3 and copper B (CU(B)). The BNC reduces molecular oxygen to 2 water molecules using 4 electrons from cytochrome c in the IMS and 4 protons from the mitochondrial matrix. This Gerbillurus vallinus (Brush-tailed hairy-footed gerbil) protein is Cytochrome c oxidase subunit 2 (MT-CO2).